The following is a 488-amino-acid chain: Glutamyl-tRNA(Gln) amidotransferase subunit A, mitochondrial (488 aa).

Catalysis depends on charge relay system residues Lys62 and Ser140. The Acyl-ester intermediate role is filled by Ser164. Positions 205 to 228 (GHDDNDPTSITPQTRERIQDRLSR) are disordered. Positions 218–227 (TRERIQDRLS) are enriched in basic and acidic residues.

Belongs to the amidase family. GatA subfamily. Subunit of the heterotrimeric GatCAB amidotransferase (AdT) complex, composed of A, B and C subunits.

The protein resides in the mitochondrion. The enzyme catalyses L-glutamyl-tRNA(Gln) + L-glutamine + ATP + H2O = L-glutaminyl-tRNA(Gln) + L-glutamate + ADP + phosphate + H(+). Allows the formation of correctly charged Gln-tRNA(Gln) through the transamidation of misacylated Glu-tRNA(Gln) in the mitochondria. The reaction takes place in the presence of glutamine and ATP through an activated gamma-phospho-Glu-tRNA(Gln). The chain is Glutamyl-tRNA(Gln) amidotransferase subunit A, mitochondrial from Tuber melanosporum (strain Mel28) (Perigord black truffle).